The sequence spans 311 residues: Acetyl-coenzyme A carboxylase carboxyl transferase subunit alpha (311 aa).

Residues 36-286 (NLSKEISKVY…ANYFISELAE (251 aa)) form the CoA carboxyltransferase C-terminal domain.

This sequence belongs to the AccA family. As to quaternary structure, acetyl-CoA carboxylase is a heterohexamer composed of biotin carboxyl carrier protein (AccB), biotin carboxylase (AccC) and two subunits each of ACCase subunit alpha (AccA) and ACCase subunit beta (AccD).

It is found in the cytoplasm. The enzyme catalyses N(6)-carboxybiotinyl-L-lysyl-[protein] + acetyl-CoA = N(6)-biotinyl-L-lysyl-[protein] + malonyl-CoA. Its pathway is lipid metabolism; malonyl-CoA biosynthesis; malonyl-CoA from acetyl-CoA: step 1/1. In terms of biological role, component of the acetyl coenzyme A carboxylase (ACC) complex. First, biotin carboxylase catalyzes the carboxylation of biotin on its carrier protein (BCCP) and then the CO(2) group is transferred by the carboxyltransferase to acetyl-CoA to form malonyl-CoA. The polypeptide is Acetyl-coenzyme A carboxylase carboxyl transferase subunit alpha (Campylobacter concisus (strain 13826)).